Here is a 223-residue protein sequence, read N- to C-terminus: Uracil phosphoribosyltransferase (223 aa).

5-phospho-alpha-D-ribose 1-diphosphate contacts are provided by residues arginine 86, arginine 111, and 145–153; that span reads DPILATGST. Uracil contacts are provided by residues isoleucine 209 and 214-216; that span reads GDA. A 5-phospho-alpha-D-ribose 1-diphosphate-binding site is contributed by aspartate 215.

This sequence belongs to the UPRTase family. The cofactor is Mg(2+).

The catalysed reaction is UMP + diphosphate = 5-phospho-alpha-D-ribose 1-diphosphate + uracil. The protein operates within pyrimidine metabolism; UMP biosynthesis via salvage pathway; UMP from uracil: step 1/1. Allosterically activated by GTP. Its function is as follows. Catalyzes the conversion of uracil and 5-phospho-alpha-D-ribose 1-diphosphate (PRPP) to UMP and diphosphate. The chain is Uracil phosphoribosyltransferase from Natronomonas pharaonis (strain ATCC 35678 / DSM 2160 / CIP 103997 / JCM 8858 / NBRC 14720 / NCIMB 2260 / Gabara) (Halobacterium pharaonis).